The chain runs to 558 residues: Solute carrier family 22 member 6-A (558 aa).

At 1–15 (MSFAELLERTGGMGR) the chain is on the cytoplasmic side. The chain crosses the membrane as a helical span at residues 16–36 (FQITQVALMCFPILLMASHNL). The Extracellular segment spans residues 37 to 140 (LQNFSAAIPD…LVCGHKNRRQ (104 aa)). A helical transmembrane segment spans residues 141–161 (LAQSVYMGGVLVGAIILGGLS). Residues 162 to 167 (DRYGRR) lie on the Cytoplasmic side of the membrane. Residues 168–188 (ALLIWSYFQMAVSGLCSAFSP) traverse the membrane as a helical segment. Residues 189-197 (NYLSYCIFR) are Extracellular-facing. Residues 198 to 218 (FLTGMALSGIGLNTTALIVEW) traverse the membrane as a helical segment. Over 219-225 (VPTRVRT) the chain is Cytoplasmic. Residues 226–246 (ITGTLAGFSYTVGQLLLAGLA) traverse the membrane as a helical segment. The Extracellular portion of the chain corresponds to 247 to 253 (YAMRDWR). The helical transmembrane segment at 254-274 (WLQLCVSLPFFIFFLYSWWFP) threads the bilayer. The Cytoplasmic portion of the chain corresponds to 275–342 (ESARWLVLSG…DLIRTSTIRR (68 aa)). A helical membrane pass occupies residues 343-363 (ISCALSLVWFSTSFAYYGLAM). Over 364–369 (DLQNFN) the chain is Extracellular. The helical transmembrane segment at 370-390 (VSIYLIQVIFGAVDFPAKIFS) threads the bilayer. Residues 391–400 (TTAMIYVGRK) are Cytoplasmic-facing. A helical transmembrane segment spans residues 401–421 (FTQLMSLILGGVVILANSFVP). The Extracellular segment spans residues 422-428 (HEMQTVR). The helical transmembrane segment at 429-449 (TGMAVFGKGCLAASFSCVFLY) threads the bilayer. Over 450-462 (TTELYPTVIRQSG) the chain is Cytoplasmic. The helical transmembrane segment at 463 to 483 (LGLCSTMARIGGIVAPLVKIL) threads the bilayer. Topologically, residues 484–488 (GEYYP) are extracellular. The helical transmembrane segment at 489–509 (FLPLVIYGGAPIISGLCVFFL) threads the bilayer. Residues 510 to 558 (PETVNKPLPDTIEEVEKRIKAPKKENEMNEIVSLKKKEGMKENPVNDVL) are Cytoplasmic-facing. A compositionally biased stretch (basic and acidic residues) spans 539 to 550 (EIVSLKKKEGMK). The tract at residues 539–558 (EIVSLKKKEGMKENPVNDVL) is disordered.

Belongs to the major facilitator (TC 2.A.1) superfamily. Organic cation transporter (TC 2.A.1.19) family. In terms of processing, glycosylated. Glycosylation is necessary for proper targeting of the transporter to the plasma membrane.

It localises to the cell membrane. It is found in the basolateral cell membrane. The protein localises to the basal cell membrane. Functionally, involved in the renal elimination of endogenous and exogenous organic anions. Mediates the sodium-independent uptake of p-aminohippurate (PAH), 2,3-dimercapto-1-propanesulfonic acid (DMPS), cidofovir, adefovir, 9-(2-phosphonylmethoxyethyl) guanine (PMEG), 9-(2-phosphonylmethoxyethyl) diaminopurine (PMEDAP), ochratoxin (OTA), acyclovir (ACV), 3'-azido-3-'deoxythymidine (AZT), cimetidine (CMD), 2,4-dichloro-phenoxyacetate (2,4-D), hippurate (HA), indoleacetate (IA), indoxyl sulfate (IS) and 3-carboxy-4-methyl-5-propyl-2-furanpropionate (CMPF) and edaravone sulfate. PAH uptake is inhibited by p-chloromercuribenzenesulphonate (PCMBS), diethyl pyrocarbonate (DEPC), indomethacin, sulindac, diclofenac, carprofen, okadaic acid, benzothiazolylcysteine (BTC), S-chlorotrifluoroethylcysteine (CTFC), cysteine S-conjugates S-dichlorovinylcysteine (DCVC), furosemide, steviol, phorbol 12-myristate 13-acetate (PMA), calcium ionophore A23187, benzylpenicillin, bumetamide, losartan, probenecid, phenol red, urate, glutarate and alpha-ketoglutarate. This is Solute carrier family 22 member 6-A (slc22a6-a) from Xenopus laevis (African clawed frog).